We begin with the raw amino-acid sequence, 122 residues long: Aspartate 1-decarboxylase (122 aa).

The active-site Schiff-base intermediate with substrate; via pyruvic acid is the S25. A Pyruvic acid (Ser) modification is found at S25. T57 contacts substrate. Y58 acts as the Proton donor in catalysis. Position 73-75 (73-75 (GAA)) interacts with substrate.

Belongs to the PanD family. Heterooctamer of four alpha and four beta subunits. The cofactor is pyruvate. Post-translationally, is synthesized initially as an inactive proenzyme, which is activated by self-cleavage at a specific serine bond to produce a beta-subunit with a hydroxyl group at its C-terminus and an alpha-subunit with a pyruvoyl group at its N-terminus.

It localises to the cytoplasm. It catalyses the reaction L-aspartate + H(+) = beta-alanine + CO2. It participates in cofactor biosynthesis; (R)-pantothenate biosynthesis; beta-alanine from L-aspartate: step 1/1. Its function is as follows. Catalyzes the pyruvoyl-dependent decarboxylation of aspartate to produce beta-alanine. This chain is Aspartate 1-decarboxylase, found in Bordetella pertussis (strain Tohama I / ATCC BAA-589 / NCTC 13251).